A 277-amino-acid chain; its full sequence is MPQPMKLDPLSNTFKHALAGGRPQIGLWLGLADPYCAEICAGAGFDWLLIDGEHAPNDVRSTLAQLQALAAYPVAPVVRPPVGDTHLIKQYLDLGVQTLLVPMVDTPEQARQLVQATRYPPQGIRGVGSALARASRWNAVPDYLTRANDEICLLVQVESRLGLENLDEIAAVEGVDGVFIGPADLSASLGHLGHPGHPDVAQAIEDALRRIVGAGKAAGILSADERLARHYLALGATFVAVGVDTTLLARAARTLAASFKDKSREEAEPEPQGGSVY.

H54 serves as the catalytic Proton acceptor. A divalent metal cation contacts are provided by E158 and D184.

Belongs to the HpcH/HpaI aldolase family. It depends on a divalent metal cation as a cofactor.

The catalysed reaction is D-glyceraldehyde + 3-hydroxypyruvate = (3R,4S,5R)-3,4,5,6-tetrahydroxy-2-oxohexanoate. It catalyses the reaction D-glyceraldehyde + 3-hydroxypyruvate = 2-dehydro-D-gluconate. It carries out the reaction D-glyceraldehyde + 3-hydroxypyruvate = 2-dehydro-D-galactonate. The enzyme catalyses D-glyceraldehyde + pyruvate = 2-dehydro-3-deoxy-L-galactonate. Aldolase which can catalyze in vitro the aldolisation reaction between hydroxypyruvate (HPA) or pyruvate (PA) and D-glyceraldehyde (D-GA). The condensation of hydroxypyruvate and D-glyceraldehyde produces (3R,4S,5R)-3,4,5,6-tetrahydroxy-2-oxohexanoate as the major product, 2-dehydro-D-gluconate and 2-dehydro-D-galactonate. The condensation of pyruvate and D-glyceraldehyde produces 2-dehydro-3-deoxy-L-galactonate as the major product. In Deinococcus radiodurans (strain ATCC 13939 / DSM 20539 / JCM 16871 / CCUG 27074 / LMG 4051 / NBRC 15346 / NCIMB 9279 / VKM B-1422 / R1), this protein is Hydroxypyruvate/pyruvate aldolase.